Reading from the N-terminus, the 293-residue chain is Elongation factor Ts (293 aa).

Residues 80 to 83 (TDFV) are involved in Mg(2+) ion dislocation from EF-Tu.

This sequence belongs to the EF-Ts family.

The protein localises to the cytoplasm. In terms of biological role, associates with the EF-Tu.GDP complex and induces the exchange of GDP to GTP. It remains bound to the aminoacyl-tRNA.EF-Tu.GTP complex up to the GTP hydrolysis stage on the ribosome. This Lacticaseibacillus casei (strain BL23) (Lactobacillus casei) protein is Elongation factor Ts.